The sequence spans 459 residues: Chromosomal replication initiator protein DnaA (459 aa).

The domain I, interacts with DnaA modulators stretch occupies residues 1 to 83 (MKNAREIWRN…NKLEIHFIEE (83 aa)). Residues 83 to 121 (ESQAHKYAPADGSSNESIAVTETKEQPVLLPSKEEGDLG) are domain II. The tract at residues 122 to 338 (QLNDKYIFET…GALTRVVAYA (217 aa)) is domain III, AAA+ region. Gly-166, Gly-168, Lys-169, and Thr-170 together coordinate ATP. Positions 339-459 (KLVGRPIDPD…IQTLKKALSN (121 aa)) are domain IV, binds dsDNA.

It belongs to the DnaA family. In terms of assembly, oligomerizes as a right-handed, spiral filament on DNA at oriC.

It localises to the cytoplasm. Its function is as follows. Plays an essential role in the initiation and regulation of chromosomal replication. ATP-DnaA binds to the origin of replication (oriC) to initiate formation of the DNA replication initiation complex once per cell cycle. Binds the DnaA box (a 9 base pair repeat at the origin) and separates the double-stranded (ds)DNA. Forms a right-handed helical filament on oriC DNA; dsDNA binds to the exterior of the filament while single-stranded (ss)DNA is stabiized in the filament's interior. The ATP-DnaA-oriC complex binds and stabilizes one strand of the AT-rich DNA unwinding element (DUE), permitting loading of DNA polymerase. After initiation quickly degrades to an ADP-DnaA complex that is not apt for DNA replication. Binds acidic phospholipids. In Exiguobacterium sp. (strain ATCC BAA-1283 / AT1b), this protein is Chromosomal replication initiator protein DnaA.